Consider the following 734-residue polypeptide: Protein arginine N-methyltransferase 5 (734 aa).

Residues 1-16 show a composition bias toward polar residues; sequence MSNRTYADNLFPQQVA. Residues 1 to 39 are disordered; the sequence is MSNRTYADNLFPQQVAEQHEEQMSSGSSPKSNSPSRSIS. Low complexity predominate over residues 24–39; that stretch reads SSGSSPKSNSPSRSIS. A TIM barrel region spans residues 42 to 329; the sequence is EAANSRIHIG…EYSQALRHAV (288 aa). One can recognise an SAM-dependent MTase PRMT-type domain in the interval 360–706; that stretch reads LQAPLQPLSE…VDNTGVWYEW (347 aa). An S-adenosyl-L-methionine-binding site is contributed by tyrosine 376. An a protein-binding site is contributed by phenylalanine 379. S-adenosyl-L-methionine-binding positions include 385-386, glutamate 450, and 477-478; these read KY and DM. The a protein site is built by glutamate 499 and glutamate 508. Catalysis depends on proton donor/acceptor residues glutamate 499 and glutamate 508. The segment at 529–734 is beta barrel; the sequence is PQKYTSYVKP…PNGESYYMRM (206 aa). The tract at residues 541–589 is dimerization; the sequence is STHIHQTIKAQSIPYLSRAIPSHGRGEPELDEDEMWIQKYPQGHVRNNM.

It belongs to the class I-like SAM-binding methyltransferase superfamily. Protein arginine N-methyltransferase family. In terms of assembly, homodimer. Interacts with cep-1 (via C-terminus domain); does not methylate cep-1. Interacts with cbp-1 (via N-terminus domain and HAT domain); the interaction results in methylation of cbp-1. Component of a complex that contains cep-1 and cbp-1. May interact with pid-2, pid-4 and pid-5.

The protein localises to the nucleus. The enzyme catalyses L-arginyl-[protein] + 2 S-adenosyl-L-methionine = N(omega),N(omega)'-dimethyl-L-arginyl-[protein] + 2 S-adenosyl-L-homocysteine + 2 H(+). Catalyzes the symmetrical dimethylation of arginine residues in targets such as small nuclear ribonucleoproteins, histone H2A/H4 and cbp-1. Dimethylation occurs in a distributive manner where the protein is released after the addition of the first methyl group prior to rebinding for the addition of the second methyl group. Plays a role in the negative regulation of DNA damage-induced apoptosis. By methylating cbp-1, may prevent apoptosis by repressing the capacity of cbp-1 to enhance cep-1 dependent transcription activation of the programmed cell death activator egl-1. Plays a role in heat and oxidative stress resistance. The sequence is that of Protein arginine N-methyltransferase 5 from Caenorhabditis elegans.